Consider the following 265-residue polypeptide: Undecaprenyl-diphosphatase (265 aa).

8 helical membrane passes run 7–27 (VIVSIIIGVIEGITEFLPISS), 45–65 (TKILEIFIEFGSALSILYFFH), 86–106 (LHILLAILPTIFFGLLFYKKI), 108–128 (LLFNTYNVMYALILGGIFLLI), 145–165 (ISLLQSAIIGFFQIFCLYPGF), 186–206 (IEFSFIISIPLIMGASFYDFI), 214–234 (ILDLPIFFIGFMISFIVSILC), and 245–265 (TSLIFFGIYRFIISGLIYFIN).

This sequence belongs to the UppP family.

The protein localises to the cell membrane. It catalyses the reaction di-trans,octa-cis-undecaprenyl diphosphate + H2O = di-trans,octa-cis-undecaprenyl phosphate + phosphate + H(+). In terms of biological role, catalyzes the dephosphorylation of undecaprenyl diphosphate (UPP). Confers resistance to bacitracin. The polypeptide is Undecaprenyl-diphosphatase (Buchnera aphidicola subsp. Acyrthosiphon pisum (strain 5A)).